Reading from the N-terminus, the 299-residue chain is MERQLEAYCAHLRNERQVSEHTLLAYRRDLEKVIEYCNTQGIAGWGALQIQQLRQLIARQHHQGQSSRSLARLLSAVRGLYRYLNREGLCQHDPASGLSAPKGERRLPKVLDTDRALQLLDGGVDDDFIARRDQAILELFYSSGLRLSELTNLDLEHLDLAAGLVQVLGKGGKARVLPVGRKAREAMQQWLRLRGIGGPRDGAVFISRQGNRLGPRAIQMRVKAAGERELGQHLHPHMLRHSFASHVLESSQDLRAVQEMLGHADISTTQIYTHLDFQHLAAVYDSAHPRAKRSKGTDS.

Residues 1-85 (MERQLEAYCA…AVRGLYRYLN (85 aa)) enclose the Core-binding (CB) domain. The 180-residue stretch at 106-285 (RLPKVLDTDR…DFQHLAAVYD (180 aa)) folds into the Tyr recombinase domain. Catalysis depends on residues Arg146, Lys170, His237, Arg240, and His263. The active-site O-(3'-phospho-DNA)-tyrosine intermediate is the Tyr272.

The protein belongs to the 'phage' integrase family. XerC subfamily. Forms a cyclic heterotetrameric complex composed of two molecules of XerC and two molecules of XerD.

The protein resides in the cytoplasm. Functionally, site-specific tyrosine recombinase, which acts by catalyzing the cutting and rejoining of the recombining DNA molecules. The XerC-XerD complex is essential to convert dimers of the bacterial chromosome into monomers to permit their segregation at cell division. It also contributes to the segregational stability of plasmids. The chain is Tyrosine recombinase XerC from Pseudomonas putida (strain W619).